Here is a 400-residue protein sequence, read N- to C-terminus: NAD-dependent protein deacetylase sirtuin-7 (400 aa).

Residues 1–27 (MAAGGLSRSERKAAERVRRLREEQQRE) form a disordered region. Over residues 8-27 (RSERKAAERVRRLREEQQRE) the composition is skewed to basic and acidic residues. Residues 82–329 (PEELRGKVRE…RLLMAELGLE (248 aa)) enclose the Deacetylase sirtuin-type domain. Residues 107-126 (GAGISTAASIPDYRGPNGVW) and 167-170 (QNCD) contribute to the NAD(+) site. Catalysis depends on histidine 187, which acts as the Proton acceptor. Positions 195, 198, 225, and 228 each coordinate Zn(2+). Residues 268–270 (GSS), 297–299 (NLQ), and cysteine 315 contribute to the NAD(+) site. The segment at 354-380 (SHSRKSLCRSREEAPPGDRGAPLSSAP) is disordered. At arginine 388 the chain carries Asymmetric dimethylarginine; alternate. Arginine 388 carries the omega-N-methylarginine; alternate modification.

The protein belongs to the sirtuin family. Class IV subfamily. As to quaternary structure, interacts with UBTF and the RNA polymerase I complex. Interacts with components of the B-WICH complex, such as MYBBP1A, SMARCA5/SNF2H and BAZ1B/WSTF. Interacts with ELK4, leading to stabilization at target promoters for H3K18Ac deacetylation. Interacts with histone H2A and/or histone H2B. Interacts with DNMT1. Interacts with SIRT1. The cofactor is Zn(2+). Phosphorylated during mitosis. Post-translationally, methylation at Arg-388 by PRMT6 inhibits the H3K18Ac histone deacetylase activity, promoting mitochondria biogenesis and maintaining mitochondria respiration. In terms of processing, ubiquitinated via 'Lys-63'-linked ubiquitin chains. Deubiquitinated by USP7, inhibiting the H3K18Ac histone deacetylase activity and regulating gluconeogenesis. Ubiquitinated by E3 ubiquitin-protein ligase complex containing FBXO7; leading to proteasomal degradation.

The protein resides in the nucleus. It is found in the nucleolus. The protein localises to the nucleoplasm. Its subcellular location is the chromosome. It localises to the cytoplasm. It catalyses the reaction N(6)-acetyl-L-lysyl-[protein] + NAD(+) + H2O = 2''-O-acetyl-ADP-D-ribose + nicotinamide + L-lysyl-[protein]. The catalysed reaction is N(6)-glutaryl-L-lysyl-[protein] + NAD(+) + H2O = 2''-O-glutaryl-ADP-D-ribose + nicotinamide + L-lysyl-[protein]. It carries out the reaction N(6)-succinyl-L-lysyl-[protein] + NAD(+) + H2O = 2''-O-succinyl-ADP-D-ribose + nicotinamide + L-lysyl-[protein]. The enzyme catalyses N(6)-propanoyl-L-lysyl-[protein] + NAD(+) + H2O = 3''-O-propanoyl-ADP-D-ribose + nicotinamide + L-lysyl-[protein]. It catalyses the reaction N(6)-decanoyl-L-lysyl-[protein] + NAD(+) + H2O = 2''-O-decanoyl-ADP-D-ribose + nicotinamide + L-lysyl-[protein]. With respect to regulation, NAD-dependent protein-lysine deacetylase and deacylase activities are activated by nucleic acids. Histone deacetylase activity is activated by DNA and nucleosomes. Protein-lysine deacylase activity is activated by RNA. H3K18Ac histone deacetylase activity is inhibited by methylation at Arg-388. H3K18Ac histone deacetylase activity is inhibited by deubiquitination by USP7. In terms of biological role, NAD-dependent protein-lysine deacylase that can act both as a deacetylase or deacylase (desuccinylase, depropionylase, deglutarylase and dedecanoylase), depending on the context. Specifically mediates deacetylation of histone H3 at 'Lys-18' (H3K18Ac). In contrast to other histone deacetylases, displays strong preference for a specific histone mark, H3K18Ac, directly linked to control of gene expression. H3K18Ac is mainly present around the transcription start site of genes and has been linked to activation of nuclear hormone receptors; SIRT7 thereby acts as a transcription repressor. Moreover, H3K18 hypoacetylation has been reported as a marker of malignancy in various cancers and seems to maintain the transformed phenotype of cancer cells. Also able to mediate deacetylation of histone H3 at 'Lys-36' (H3K36Ac) in the context of nucleosomes. Also mediates deacetylation of non-histone proteins, such as ATM, CDK9, DDX21, DDB1, FBL, FKBP5/FKBP51, GABPB1, RAN, RRP9/U3-55K and POLR1E/PAF53. Enriched in nucleolus where it stimulates transcription activity of the RNA polymerase I complex. Acts by mediating the deacetylation of the RNA polymerase I subunit POLR1E/PAF53, thereby promoting the association of RNA polymerase I with the rDNA promoter region and coding region. In response to metabolic stress, SIRT7 is released from nucleoli leading to hyperacetylation of POLR1E/PAF53 and decreased RNA polymerase I transcription. Required to restore the transcription of ribosomal RNA (rRNA) at the exit from mitosis. Promotes pre-ribosomal RNA (pre-rRNA) cleavage at the 5'-terminal processing site by mediating deacetylation of RRP9/U3-55K, a core subunit of the U3 snoRNP complex. Mediates 'Lys-37' deacetylation of Ran, thereby regulating the nuclear export of NF-kappa-B subunit RELA/p65. Acts as a regulator of DNA damage repair by mediating deacetylation of ATM during the late stages of DNA damage response, promoting ATM dephosphorylation and deactivation. Suppresses the activity of the DCX (DDB1-CUL4-X-box) E3 ubiquitin-protein ligase complexes by mediating deacetylation of DDB1, which prevents the interaction between DDB1 and CUL4 (CUL4A or CUL4B). Activates RNA polymerase II transcription by mediating deacetylation of CDK9, thereby promoting 'Ser-2' phosphorylation of the C-terminal domain (CTD) of RNA polymerase II. Deacetylates FBL, promoting histone-glutamine methyltransferase activity of FBL. Acts as a regulator of mitochondrial function by catalyzing deacetylation of GABPB1. Regulates Akt/AKT1 activity by mediating deacetylation of FKBP5/FKBP51. Required to prevent R-loop-associated DNA damage and transcription-associated genomic instability by mediating deacetylation and subsequent activation of DDX21, thereby overcoming R-loop-mediated stalling of RNA polymerases. In addition to protein deacetylase activity, also acts as a protein-lysine deacylase. Acts as a protein depropionylase by mediating depropionylation of Osterix (SP7), thereby regulating bone formation by osteoblasts. Acts as a histone deglutarylase by mediating deglutarylation of histone H4 on 'Lys-91' (H4K91glu); a mark that destabilizes nucleosomes by promoting dissociation of the H2A-H2B dimers from nucleosomes. Acts as a histone desuccinylase: in response to DNA damage, recruited to DNA double-strand breaks (DSBs) and catalyzes desuccinylation of histone H3 on 'Lys-122' (H3K122succ), thereby promoting chromatin condensation and DSB repair. Also promotes DSB repair by promoting H3K18Ac deacetylation, regulating non-homologous end joining (NHEJ). Along with its role in DNA repair, required for chromosome synapsis during prophase I of female meiosis by catalyzing H3K18Ac deacetylation. Involved in transcriptional repression of LINE-1 retrotransposon via H3K18Ac deacetylation, and promotes their association with the nuclear lamina. Required to stabilize ribosomal DNA (rDNA) heterochromatin and prevent cellular senescence induced by rDNA instability. Acts as a negative regulator of SIRT1 by preventing autodeacetylation of SIRT1, restricting SIRT1 deacetylase activity. This is NAD-dependent protein deacetylase sirtuin-7 from Homo sapiens (Human).